A 569-amino-acid polypeptide reads, in one-letter code: Proline--tRNA ligase (569 aa).

Belongs to the class-II aminoacyl-tRNA synthetase family. ProS type 1 subfamily. In terms of assembly, homodimer.

The protein localises to the cytoplasm. The enzyme catalyses tRNA(Pro) + L-proline + ATP = L-prolyl-tRNA(Pro) + AMP + diphosphate. Its function is as follows. Catalyzes the attachment of proline to tRNA(Pro) in a two-step reaction: proline is first activated by ATP to form Pro-AMP and then transferred to the acceptor end of tRNA(Pro). As ProRS can inadvertently accommodate and process non-cognate amino acids such as alanine and cysteine, to avoid such errors it has two additional distinct editing activities against alanine. One activity is designated as 'pretransfer' editing and involves the tRNA(Pro)-independent hydrolysis of activated Ala-AMP. The other activity is designated 'posttransfer' editing and involves deacylation of mischarged Ala-tRNA(Pro). The misacylated Cys-tRNA(Pro) is not edited by ProRS. This Legionella pneumophila (strain Paris) protein is Proline--tRNA ligase.